The chain runs to 382 residues: uncharacterized protein (382 aa).

12 consecutive transmembrane segments (helical) span residues 8 to 28, 45 to 65, 75 to 95, 102 to 122, 131 to 151, 157 to 177, 204 to 224, 231 to 251, 270 to 290, 291 to 311, 325 to 345, and 349 to 369; these read VMLLLCGLLLLTLAIAVLNTL, MVSSSYFTGNLVGTLFTGYLI, YLASLIFAAGCVGLGVMVGFW, FIAGIGCAMIWVVVESALMCS, LLAAYMMVYYMGTFLGQLLVS, LLHVLPWVTGMILAGILPLLF, LGVNGCIISGIVLGSLYGLMP, GMANASIGFWMAVLVSAGILG, VQVFVVILGSIAMLTQAAMAP, ALFILGAAGFTLYPVAMAWAC, ALLLSYTVGSLLGPSFAAMLM, and SDNLLFIMIASVSFIYLLMLL.

It belongs to the major facilitator superfamily. YcaD (TC 2.A.1.26) family.

The protein localises to the cell inner membrane. This is an uncharacterized protein from Salmonella newport (strain SL254).